Consider the following 487-residue polypeptide: Putative sugar kinase YoaC (487 aa).

It belongs to the FGGY kinase family.

This chain is Putative sugar kinase YoaC (yoaC), found in Bacillus subtilis (strain 168).